The following is a 181-amino-acid chain: Negative modulator of initiation of replication (181 aa).

Interaction with DNA regions lie at residues 87–88 (AV), 116–120 (RTRVY), and 150–156 (NTNTGRK).

This sequence belongs to the SeqA family. Homodimer. Polymerizes to form helical filaments.

It is found in the cytoplasm. Functionally, negative regulator of replication initiation, which contributes to regulation of DNA replication and ensures that replication initiation occurs exactly once per chromosome per cell cycle. Binds to pairs of hemimethylated GATC sequences in the oriC region, thus preventing assembly of replication proteins and re-initiation at newly replicated origins. Repression is relieved when the region becomes fully methylated. This is Negative modulator of initiation of replication from Shigella dysenteriae serotype 1 (strain Sd197).